The sequence spans 335 residues: DNA-directed RNA polymerase subunit alpha (335 aa).

The segment at 1 to 233 is alpha N-terminal domain (alpha-NTD); that stretch reads MTRTANEFLT…QQIAIFVDLQ (233 aa). Positions 247-335 are alpha C-terminal domain (alpha-CTD); sequence VDPILLRPVD…MDDRFAYRSR (89 aa).

Belongs to the RNA polymerase alpha chain family. In terms of assembly, homodimer. The RNAP catalytic core consists of 2 alpha, 1 beta, 1 beta' and 1 omega subunit. When a sigma factor is associated with the core the holoenzyme is formed, which can initiate transcription.

It catalyses the reaction RNA(n) + a ribonucleoside 5'-triphosphate = RNA(n+1) + diphosphate. Its function is as follows. DNA-dependent RNA polymerase catalyzes the transcription of DNA into RNA using the four ribonucleoside triphosphates as substrates. This is DNA-directed RNA polymerase subunit alpha from Acinetobacter baumannii (strain AB307-0294).